We begin with the raw amino-acid sequence, 376 residues long: Gibberellic acid methyltransferase 1 (376 aa).

The S-adenosyl-L-homocysteine site is built by tyrosine 22, cysteine 64, asparagine 69, aspartate 104, leucine 105, serine 136, and phenylalanine 137. Tryptophan 158 provides a ligand contact to gibberellin A9. Residues asparagine 175, valine 179, arginine 265, aspartate 266, phenylalanine 268, and asparagine 269 each coordinate Mg(2+).

Belongs to the methyltransferase superfamily. Type-7 methyltransferase family. SABATH subfamily. Requires Mg(2+) as cofactor. Expressed in siliques, developing seeds, anthers and germinating seeds. Not detected in leaves, stems, flowers and roots.

It catalyses the reaction gibberellin A9 + S-adenosyl-L-methionine = O-methyl gibberellin A9 + S-adenosyl-L-homocysteine. Up-regulated by K(+) and NH(4+), down-regulated by Zn(2+), Cu(2+), Fe(2+) and Fe(3+). Methylates the carboxyl group of several gibberellins (GAs). Substrate preference is GA9 &gt; GA20 &gt; GA3 &gt; GA4 &gt; GA34 &gt; GA51 &gt; GA1 &gt; GA19 &gt; GA12. No activity with diterpenes abietic acid and ent-kaurenoic acid. The polypeptide is Gibberellic acid methyltransferase 1 (GAMT1) (Arabidopsis thaliana (Mouse-ear cress)).